Reading from the N-terminus, the 351-residue chain is Phosphate acyltransferase (351 aa).

It belongs to the PlsX family. In terms of assembly, homodimer. Probably interacts with PlsY.

The protein localises to the cytoplasm. The catalysed reaction is a fatty acyl-[ACP] + phosphate = an acyl phosphate + holo-[ACP]. Its pathway is lipid metabolism; phospholipid metabolism. In terms of biological role, catalyzes the reversible formation of acyl-phosphate (acyl-PO(4)) from acyl-[acyl-carrier-protein] (acyl-ACP). This enzyme utilizes acyl-ACP as fatty acyl donor, but not acyl-CoA. This Neisseria meningitidis serogroup C / serotype 2a (strain ATCC 700532 / DSM 15464 / FAM18) protein is Phosphate acyltransferase.